The following is a 322-amino-acid chain: HPr kinase/phosphorylase (322 aa).

Residues His146 and Lys167 contribute to the active site. ATP is bound at residue 161-168; the sequence is GDSGLGKS. Residue Ser168 participates in Mg(2+) binding. The Proton acceptor; for phosphorylation activity. Proton donor; for dephosphorylation activity role is filled by Asp185. The segment at 209–218 is important for the catalytic mechanism of both phosphorylation and dephosphorylation; the sequence is LEVRGLGLLD. Glu210 provides a ligand contact to Mg(2+). The active site involves Arg250. Residues 271–276 are important for the catalytic mechanism of dephosphorylation; the sequence is QVAAGR.

Belongs to the HPrK/P family. In terms of assembly, homohexamer. Mg(2+) is required as a cofactor.

It catalyses the reaction [HPr protein]-L-serine + ATP = [HPr protein]-O-phospho-L-serine + ADP + H(+). It carries out the reaction [HPr protein]-O-phospho-L-serine + phosphate + H(+) = [HPr protein]-L-serine + diphosphate. Its function is as follows. Catalyzes the ATP- as well as the pyrophosphate-dependent phosphorylation of a specific serine residue in HPr, a phosphocarrier protein of the phosphoenolpyruvate-dependent sugar phosphotransferase system (PTS). HprK/P also catalyzes the pyrophosphate-producing, inorganic phosphate-dependent dephosphorylation (phosphorolysis) of seryl-phosphorylated HPr (P-Ser-HPr). The protein is HPr kinase/phosphorylase of Burkholderia lata (strain ATCC 17760 / DSM 23089 / LMG 22485 / NCIMB 9086 / R18194 / 383).